A 240-amino-acid chain; its full sequence is Enolase-phosphatase E1 (240 aa).

Residues D9 and E11 each contribute to the Mg(2+) site. Residues 129-130 and K168 each bind substrate; that span reads SS. D195 contacts Mg(2+).

Belongs to the HAD-like hydrolase superfamily. MasA/MtnC family. As to quaternary structure, monomer. The cofactor is Mg(2+).

It localises to the cytoplasm. The protein resides in the nucleus. The catalysed reaction is 5-methylsulfanyl-2,3-dioxopentyl phosphate + H2O = 1,2-dihydroxy-5-(methylsulfanyl)pent-1-en-3-one + phosphate. It participates in amino-acid biosynthesis; L-methionine biosynthesis via salvage pathway; L-methionine from S-methyl-5-thio-alpha-D-ribose 1-phosphate: step 3/6. Its pathway is amino-acid biosynthesis; L-methionine biosynthesis via salvage pathway; L-methionine from S-methyl-5-thio-alpha-D-ribose 1-phosphate: step 4/6. In terms of biological role, bifunctional enzyme that catalyzes the enolization of 2,3-diketo-5-methylthiopentyl-1-phosphate (DK-MTP-1-P) into the intermediate 2-hydroxy-3-keto-5-methylthiopentenyl-1-phosphate (HK-MTPenyl-1-P), which is then dephosphorylated to form the acireductone 1,2-dihydroxy-3-keto-5-methylthiopentene (DHK-MTPene). This chain is Enolase-phosphatase E1, found in Candida tropicalis (strain ATCC MYA-3404 / T1) (Yeast).